The following is a 251-amino-acid chain: 5'-nucleotidase SurE (251 aa).

4 residues coordinate a divalent metal cation: D8, D9, S39, and N90.

This sequence belongs to the SurE nucleotidase family. Requires a divalent metal cation as cofactor.

The protein resides in the cytoplasm. The enzyme catalyses a ribonucleoside 5'-phosphate + H2O = a ribonucleoside + phosphate. Nucleotidase that shows phosphatase activity on nucleoside 5'-monophosphates. This chain is 5'-nucleotidase SurE, found in Legionella pneumophila subsp. pneumophila (strain Philadelphia 1 / ATCC 33152 / DSM 7513).